The primary structure comprises 378 residues: tRNA (guanine(26)-N(2))-dimethyltransferase (378 aa).

In terms of domain architecture, Trm1 methyltransferase spans 4–374 (KEVTEGKVRI…KGYEEIIRCV (371 aa)). Residues R44, R69, D87, D114, and A115 each contribute to the S-adenosyl-L-methionine site. 4 residues coordinate Zn(2+): C246, C249, C263, and C266.

The protein belongs to the class I-like SAM-binding methyltransferase superfamily. Trm1 family.

The catalysed reaction is guanosine(26) in tRNA + 2 S-adenosyl-L-methionine = N(2)-dimethylguanosine(26) in tRNA + 2 S-adenosyl-L-homocysteine + 2 H(+). Its function is as follows. Dimethylates a single guanine residue at position 26 of a number of tRNAs using S-adenosyl-L-methionine as donor of the methyl groups. This is tRNA (guanine(26)-N(2))-dimethyltransferase from Saccharolobus islandicus (strain L.S.2.15 / Lassen #1) (Sulfolobus islandicus).